Here is a 307-residue protein sequence, read N- to C-terminus: Myeloid-associated differentiation marker-like protein 2 (307 aa).

2 consecutive MARVEL domains span residues 17-154 and 159-303; these read AVTS…ARPG and YMAT…RIRF. A run of 7 helical transmembrane segments spans residues 53–73, 90–110, 129–149, 163–183, 198–218, 232–252, and 278–298; these read FCVAAWGFCFALSVLVVACEF, AFAMLATLLSATAAVIYPLYF, LAASVFAGLLFLAYATEVALT, VSGLLKIVQAFVACIIFGALV, VAVYSLCFLATVVVVILSVLG, VVYTFLAVLLYLSAAVIWPVF, and LVVATFTYVNLLLYVADLAYS.

The protein belongs to the MAL family.

It is found in the membrane. This chain is Myeloid-associated differentiation marker-like protein 2 (MYADML2), found in Bos taurus (Bovine).